An 875-amino-acid chain; its full sequence is Metal transporter CNNM2 (875 aa).

At 1-250 the chain is on the extracellular side; that stretch reads MIGCGACEPE…TKMIVGEEKK (250 aa). Residue N112 is glycosylated (N-linked (GlcNAc...) asparagine). The tract at residues 122–148 is disordered; it reads EHERRRHTPGERGLGGPAPPEPDSGPQ. Residues 251–271 form a helical membrane-spanning segment; it reads FLLPFWLQVIFISLLLCLSGM. In terms of domain architecture, CNNM transmembrane spans 251–431; sequence FLLPFWLQVI…DPYNDLVKEE (181 aa). The Cytoplasmic portion of the chain corresponds to 272–313; the sequence is FSGLNLGLMALDPMELRIVQNCGTEKEKNYAKRIEPVRRQGN. Residues 314–334 constitute an intramembrane region (helical); the sequence is YLLCSLLLGNVLVNTTLTILL. Topologically, residues 335 to 338 are cytoplasmic; it reads DDIA. The helical transmembrane segment at 339–359 threads the bilayer; the sequence is GSGLVAVVVSTIGIVIFGEIV. At 360 to 368 the chain is on the extracellular side; it reads PQAICSRHG. The chain crosses the membrane as a helical span at residues 369-389; that stretch reads LAVGANTIFLTKFFMMMTFPA. The Cytoplasmic segment spans residues 390 to 875; sequence SYPVSKLLDC…NHSLHSEGAI (486 aa). CBS domains are found at residues 450 to 511 and 518 to 584; these read MTPL…CTPL and YNHP…ILDE. Residues 741–763 are disordered; it reads AGSPGENKSPPRPCGLNHSDSLS. At S761 the chain carries Phosphoserine.

This sequence belongs to the ACDP family.

It is found in the cell membrane. In terms of biological role, divalent metal cation transporter. Mediates transport of divalent metal cations in an order of Mg(2+) &gt; Co(2+) &gt; Mn(2+) &gt; Sr(2+) &gt; Ba(2+) &gt; Cu(2+) &gt; Fe(2+). The polypeptide is Metal transporter CNNM2 (Cnnm2) (Rattus norvegicus (Rat)).